The primary structure comprises 227 residues: ATP synthase subunit a (227 aa).

Transmembrane regions (helical) follow at residues 14–34, 69–89, 98–118, 137–157, 169–189, and 205–223; these read LLNI…FVSF, WVVL…IGLF, QLSM…VYGF, LLVP…PLAL, HLLM…SVML, and IAVA…TLYL.

This sequence belongs to the ATPase A chain family. F-type ATPases have 2 components, CF(1) - the catalytic core - and CF(0) - the membrane proton channel. CF(1) has five subunits: alpha(3), beta(3), gamma(1), delta(1), epsilon(1). CF(0) has three main subunits: a, b and c.

It is found in the mitochondrion inner membrane. Mitochondrial membrane ATP synthase (F(1)F(0) ATP synthase or Complex V) produces ATP from ADP in the presence of a proton gradient across the membrane which is generated by electron transport complexes of the respiratory chain. F-type ATPases consist of two structural domains, F(1) - containing the extramembraneous catalytic core and F(0) - containing the membrane proton channel, linked together by a central stalk and a peripheral stalk. During catalysis, ATP synthesis in the catalytic domain of F(1) is coupled via a rotary mechanism of the central stalk subunits to proton translocation. Key component of the proton channel; it may play a direct role in the translocation of protons across the membrane. The chain is ATP synthase subunit a (ATP6) from Branchiostoma floridae (Florida lancelet).